The primary structure comprises 448 residues: Homogentisate 1,2-dioxygenase (448 aa).

The active-site Proton acceptor is the histidine 303. Fe cation is bound by residues histidine 346 and glutamate 352. Homogentisate is bound by residues tyrosine 361 and histidine 382. Histidine 382 serves as a coordination point for Fe cation.

It belongs to the homogentisate dioxygenase family. Hexamer; dimer of trimers. The cofactor is Fe cation.

The catalysed reaction is homogentisate + O2 = 4-maleylacetoacetate + H(+). It functions in the pathway amino-acid degradation; L-phenylalanine degradation; acetoacetate and fumarate from L-phenylalanine: step 4/6. Its function is as follows. Involved in the catabolism of homogentisate (2,5-dihydroxyphenylacetate or 2,5-OH-PhAc), a central intermediate in the degradation of phenylalanine and tyrosine. Catalyzes the oxidative ring cleavage of the aromatic ring of homogentisate to yield maleylacetoacetate. The chain is Homogentisate 1,2-dioxygenase from Rhodopseudomonas palustris (strain TIE-1).